We begin with the raw amino-acid sequence, 331 residues long: Ketol-acid reductoisomerase (NADP(+)) (331 aa).

Residues 2–182 (AQLFYDSDAD…GGTRAGILET (181 aa)) form the KARI N-terminal Rossmann domain. NADP(+)-binding positions include 25-28 (YGSQ), Ser-51, Ser-53, and 83-86 (DEFQ). The active site involves His-108. Residue Gly-134 participates in NADP(+) binding. Positions 183-328 (NFKEETETDL…KGLRSMFSWL (146 aa)) constitute a KARI C-terminal knotted domain. Positions 191, 195, 227, and 231 each coordinate Mg(2+). Ser-252 is a substrate binding site.

Belongs to the ketol-acid reductoisomerase family. Mg(2+) serves as cofactor.

The catalysed reaction is (2R)-2,3-dihydroxy-3-methylbutanoate + NADP(+) = (2S)-2-acetolactate + NADPH + H(+). It catalyses the reaction (2R,3R)-2,3-dihydroxy-3-methylpentanoate + NADP(+) = (S)-2-ethyl-2-hydroxy-3-oxobutanoate + NADPH + H(+). It participates in amino-acid biosynthesis; L-isoleucine biosynthesis; L-isoleucine from 2-oxobutanoate: step 2/4. Its pathway is amino-acid biosynthesis; L-valine biosynthesis; L-valine from pyruvate: step 2/4. In terms of biological role, involved in the biosynthesis of branched-chain amino acids (BCAA). Catalyzes an alkyl-migration followed by a ketol-acid reduction of (S)-2-acetolactate (S2AL) to yield (R)-2,3-dihydroxy-isovalerate. In the isomerase reaction, S2AL is rearranged via a Mg-dependent methyl migration to produce 3-hydroxy-3-methyl-2-ketobutyrate (HMKB). In the reductase reaction, this 2-ketoacid undergoes a metal-dependent reduction by NADPH to yield (R)-2,3-dihydroxy-isovalerate. This is Ketol-acid reductoisomerase (NADP(+)) from Parasynechococcus marenigrum (strain WH8102).